Consider the following 72-residue polypeptide: Large ribosomal subunit protein uL29 (72 aa).

It belongs to the universal ribosomal protein uL29 family.

The protein is Large ribosomal subunit protein uL29 of Chlamydia felis (strain Fe/C-56) (Chlamydophila felis).